Reading from the N-terminus, the 104-residue chain is Replication factor A protein 3 (104 aa).

Belongs to the replication factor A protein 3 family. As to quaternary structure, component of the heterotrimeric canonical replication protein A complex (RPA).

It localises to the nucleus. As part of the replication protein A (RPA/RP-A), a single-stranded DNA-binding heterotrimeric complex, may play an essential role in DNA replication, recombination and repair. Binds and stabilizes single-stranded DNA intermediates, preventing complementary DNA reannealing and recruiting different proteins involved in DNA metabolism. In Schizosaccharomyces pombe (strain 972 / ATCC 24843) (Fission yeast), this protein is Replication factor A protein 3 (ssb3).